A 548-amino-acid polypeptide reads, in one-letter code: Druantia protein DruB (548 aa).

The protein localises to the cytoplasm. In terms of biological role, component of antiviral defense system Druantia type I, composed of DruA, DruB, DruC, DruD and DruE. Expression of Druantia in E.coli (strain MG1655) confers resistance to phage lambda, SECphi18, SECphi27 and T4. This chain is Druantia protein DruB, found in Escherichia coli (strain UMEA 4076-1).